Reading from the N-terminus, the 384-residue chain is UDP-galactopyranose mutase (384 aa).

The signal sequence occupies residues 1–23 (MKSKKILIVGAGFSGAVIGRQLA). FAD-binding positions include Ser-14, 33 to 34 (DQ), Asn-41, and 60 to 61 (HI). Asn-84, Phe-151, Thr-156, Trp-160, and Tyr-185 together coordinate UDP-alpha-D-galactose. Phe-219 contributes to the FAD binding site. UDP-alpha-D-galactose is bound by residues Asn-270, Arg-280, and Tyr-314. Arg-343 contacts FAD. Tyr-349 contacts UDP-alpha-D-galactose. Residue 350–355 (LDMDVT) participates in FAD binding.

Belongs to the UDP-galactopyranose/dTDP-fucopyranose mutase family. As to quaternary structure, homodimer. FAD serves as cofactor.

The enzyme catalyses UDP-alpha-D-galactose = UDP-alpha-D-galactofuranose. It participates in bacterial outer membrane biogenesis; LPS O-antigen biosynthesis. Involved in the biosynthesis of the galactose-containing O-side-chain polysaccharide backbone structure of D-galactan I which is a key component of lipopolysaccharide (LPS). Catalyzes the interconversion through a 2-keto intermediate of uridine diphosphogalactopyranose (UDP-GalP) into uridine diphosphogalactofuranose (UDP-GalF) which is the biosynthetic precursor of galactofuranosyl residues. This is UDP-galactopyranose mutase (rfbD) from Klebsiella pneumoniae.